Consider the following 388-residue polypeptide: Capsid protein (388 aa).

Positions 1 to 102 (MAMVKRNNNT…KPKFTGRTSG (102 aa)) are r domain, interaction with RNA. The segment at 56-61 (KAVRRR) is involved in encapsidation. The tract at residues 103–264 (SVTVTHREYL…IFISYSVTLY (162 aa)) is s domain, virion shell. A p domain, projecting region spans residues 265-388 (FPQPTNTLLS…ATRQNDVSLI (124 aa)).

Belongs to the icosahedral plant coat protein family. Homomultimer.

Its subcellular location is the virion. Functionally, capsid protein self-assembles to form an icosahedral capsid with a T=3 symmetry, about 32-35 nm in diameter, and consisting of 180 capsid proteins. This Tomato bushy stunt virus (strain Cherry) (TBSV) protein is Capsid protein.